A 372-amino-acid chain; its full sequence is MNSGIDLQGTFIESLRDLGIPAGTAKAIWMPLPMILMLIGATVGVLVATWLERKISASAQQRIGPEYQGPFGLLVPVADGLKLVFKEDIVPAKSDPWLFTLGPIIVVIPVFLSFLIVPFGQNIVISNVGMGVFLWIALSSIQPIGLLMAGYASNNKYSLLGGLRAAAQSISYEIPLALAVLAIAMMSNSLSTVDIVNQQSGYGILGWNIWRQPIGFLIFWIAALAECERLPFDLPEAEEEIVAGYQTEYSGMKFGLFYLGSYVNLILSSLLVAILYLGGWDFPIPLNLIAGWLGVSELNPVFQIITASLGITMTVFKAYLLVFVAILLRWTVPRVRIDQLLDLGWKFLLPVGLVNLLLTAALKLAFPFAFGG.

A run of 8 helical transmembrane segments spans residues 27-47, 97-117, 128-148, 166-186, 204-224, 249-269, 308-328, and 351-371; these read AIWM…GVLV, WLFT…FLIV, VGMG…GLLM, AAQS…IAMM, ILGW…IAAL, YSGM…ILSS, SLGI…AILL, and VGLV…FAFG.

Belongs to the complex I subunit 1 family. In terms of assembly, NDH-1 is composed of at least 11 different subunits.

The protein resides in the cellular thylakoid membrane. The catalysed reaction is a plastoquinone + NADH + (n+1) H(+)(in) = a plastoquinol + NAD(+) + n H(+)(out). It carries out the reaction a plastoquinone + NADPH + (n+1) H(+)(in) = a plastoquinol + NADP(+) + n H(+)(out). NDH-1 shuttles electrons from an unknown electron donor, via FMN and iron-sulfur (Fe-S) centers, to quinones in the respiratory and/or the photosynthetic chain. The immediate electron acceptor for the enzyme in this species is believed to be plastoquinone. Couples the redox reaction to proton translocation, and thus conserves the redox energy in a proton gradient. This Nostoc punctiforme (strain ATCC 29133 / PCC 73102) protein is NAD(P)H-quinone oxidoreductase subunit 1.